The chain runs to 23 residues: Chaperonin GroEL (23 aa).

Belongs to the chaperonin (HSP60) family. In terms of assembly, forms a cylinder of 14 subunits composed of two heptameric rings stacked back-to-back. Interacts with the co-chaperonin GroES. In terms of processing, phosphorylated on threonine.

The protein localises to the cytoplasm. It catalyses the reaction ATP + H2O + a folded polypeptide = ADP + phosphate + an unfolded polypeptide.. In terms of biological role, together with its co-chaperonin GroES, plays an essential role in assisting protein folding. The GroEL-GroES system forms a nano-cage that allows encapsulation of the non-native substrate proteins and provides a physical environment optimized to promote and accelerate protein folding. The polypeptide is Chaperonin GroEL (Acidithiobacillus ferrooxidans (Thiobacillus ferrooxidans)).